Here is a 494-residue protein sequence, read N- to C-terminus: Glucose-6-phosphate 1-dehydrogenase (494 aa).

The NADP(+) site is built by Arg46 and Lys150. Residues His180, Lys184, Glu218, and Asp237 each contribute to the substrate site. The Proton acceptor role is filled by His242. Position 342 (Lys342) interacts with substrate.

The protein belongs to the glucose-6-phosphate dehydrogenase family.

It carries out the reaction D-glucose 6-phosphate + NADP(+) = 6-phospho-D-glucono-1,5-lactone + NADPH + H(+). It functions in the pathway carbohydrate degradation; pentose phosphate pathway; D-ribulose 5-phosphate from D-glucose 6-phosphate (oxidative stage): step 1/3. Functionally, catalyzes the oxidation of glucose 6-phosphate to 6-phosphogluconolactone. This is Glucose-6-phosphate 1-dehydrogenase from Aggregatibacter actinomycetemcomitans (Actinobacillus actinomycetemcomitans).